The primary structure comprises 427 residues: Forkhead box protein A1-B (427 aa).

The segment at residues 157 to 251 (KPPYSYISLI…ENGCYLRRQK (95 aa)) is a DNA-binding region (fork-head). The segment covering 256–272 (EKTQGGKGNQDGRKDHS) has biased composition (basic and acidic residues). The disordered stretch occupies residues 256–336 (EKTQGGKGNQ…HQNHSTHSLA (81 aa)). A compositionally biased stretch (low complexity) spans 285–302 (SSQMDSSSSMSNPSSSPQ). Positions 323 to 334 (PLSSHQNHSTHS) are enriched in polar residues.

Present in the vegetal pole and marginal zone but not the animal pole of gastrulae and in equal levels in the dorsal and ventral halves of both gastrulae and neurulae. At neurula stage, expressed in the notochord. During tailbud stages, expressed in the foregut, brain, hypocord, neural floor plate and in two lines of cells just dorsal and ventral to the notochord. Expressed in the adult liver.

It is found in the nucleus. Probable transcription factor. In Xenopus laevis (African clawed frog), this protein is Forkhead box protein A1-B (foxa1-b).